A 169-amino-acid polypeptide reads, in one-letter code: FAM231A/C-like protein LOC102723383 (169 aa).

Residues 82–140 (LIRSGSSQNESQEDQGAGLISQAGLKADNRRESSTWANEVEDRRPQCTPALNLTPSHPH) form a disordered region.

This sequence belongs to the FAM231 family.

The polypeptide is FAM231A/C-like protein LOC102723383 (Homo sapiens (Human)).